The primary structure comprises 263 residues: Transcription factor 19-like protein (263 aa).

The FHA domain maps to Tyr-31–Leu-88. The residue at position 78 (Ser-78) is a Phosphoserine. 2 disordered regions span residues Ser-140 to Thr-164 and Leu-189 to Ala-225.

It is found in the nucleus. Functionally, potential transcription factor that may play a role in the regulation of genes involved in cell cycle G1/S transition. May bind to regulatory elements of genes, including the promoter of the transcription factor FOXO1. This is Transcription factor 19-like protein (Tcf19) from Mus musculus (Mouse).